Here is a 345-residue protein sequence, read N- to C-terminus: N-acetyl-gamma-glutamyl-phosphate reductase (345 aa).

Cysteine 149 is an active-site residue.

It belongs to the NAGSA dehydrogenase family. Type 1 subfamily.

Its subcellular location is the cytoplasm. The enzyme catalyses N-acetyl-L-glutamate 5-semialdehyde + phosphate + NADP(+) = N-acetyl-L-glutamyl 5-phosphate + NADPH + H(+). The protein operates within amino-acid biosynthesis; L-arginine biosynthesis; N(2)-acetyl-L-ornithine from L-glutamate: step 3/4. Its function is as follows. Catalyzes the NADPH-dependent reduction of N-acetyl-5-glutamyl phosphate to yield N-acetyl-L-glutamate 5-semialdehyde. This chain is N-acetyl-gamma-glutamyl-phosphate reductase, found in Bacillus cereus (strain B4264).